Consider the following 447-residue polypeptide: Cobyrinate a,c-diamide synthase (447 aa).

The 188-residue stretch at 252–439 (KIAIAFDESF…AHQHAVGNPY (188 aa)) folds into the GATase cobBQ-type domain. Cys-331 (nucleophile) is an active-site residue.

This sequence belongs to the CobB/CbiA family. It depends on Mg(2+) as a cofactor.

The catalysed reaction is cob(II)yrinate + 2 L-glutamine + 2 ATP + 2 H2O = cob(II)yrinate a,c diamide + 2 L-glutamate + 2 ADP + 2 phosphate + 2 H(+). The enzyme catalyses Ni-sirohydrochlorin + 2 L-glutamine + 2 ATP + 2 H2O = Ni-sirohydrochlorin a,c-diamide + 2 L-glutamate + 2 ADP + 2 phosphate + 2 H(+). It participates in cofactor biosynthesis; adenosylcobalamin biosynthesis; cob(II)yrinate a,c-diamide from sirohydrochlorin (anaerobic route): step 10/10. Catalyzes the ATP-dependent amidation of the two carboxylate groups at positions a and c of cobyrinate, using either L-glutamine or ammonia as the nitrogen source. Involved in the biosynthesis of the unique nickel-containing tetrapyrrole coenzyme F430, the prosthetic group of methyl-coenzyme M reductase (MCR), which plays a key role in methanogenesis and anaerobic methane oxidation. Catalyzes the ATP-dependent amidation of the two carboxylate groups at positions a and c of Ni-sirohydrochlorin, using L-glutamine or ammonia as the nitrogen source. In Methanococcus vannielii (strain ATCC 35089 / DSM 1224 / JCM 13029 / OCM 148 / SB), this protein is Cobyrinate a,c-diamide synthase.